Here is a 187-residue protein sequence, read N- to C-terminus: ATP synthase subunit b, chloroplastic (187 aa).

Residues 29–49 traverse the membrane as a helical segment; that stretch reads LAVVLGVLIYLGKGVCAGCIL.

Belongs to the ATPase B chain family. In terms of assembly, F-type ATPases have 2 components, F(1) - the catalytic core - and F(0) - the membrane proton channel. F(1) has five subunits: alpha(3), beta(3), gamma(1), delta(1), epsilon(1). F(0) has four main subunits: a(1), b(1), b'(1) and c(10-14). The alpha and beta chains form an alternating ring which encloses part of the gamma chain. F(1) is attached to F(0) by a central stalk formed by the gamma and epsilon chains, while a peripheral stalk is formed by the delta, b and b' chains.

Its subcellular location is the plastid. It localises to the chloroplast thylakoid membrane. In terms of biological role, f(1)F(0) ATP synthase produces ATP from ADP in the presence of a proton or sodium gradient. F-type ATPases consist of two structural domains, F(1) containing the extramembraneous catalytic core and F(0) containing the membrane proton channel, linked together by a central stalk and a peripheral stalk. During catalysis, ATP synthesis in the catalytic domain of F(1) is coupled via a rotary mechanism of the central stalk subunits to proton translocation. Its function is as follows. Component of the F(0) channel, it forms part of the peripheral stalk, linking F(1) to F(0). In Angiopteris evecta (Mule's foot fern), this protein is ATP synthase subunit b, chloroplastic.